Consider the following 211-residue polypeptide: Pyridoxine/pyridoxamine 5'-phosphate oxidase (211 aa).

Residues 8 to 11 (RRDY) and K66 each bind substrate. FMN is bound by residues 61–66 (RLVLLK), 76–77 (FT), R82, K83, and Q105. Positions 123, 127, and 131 each coordinate substrate. FMN contacts are provided by residues 140-141 (QS) and W184. Residue 190-192 (RLH) coordinates substrate. R194 is a binding site for FMN.

Belongs to the pyridoxamine 5'-phosphate oxidase family. As to quaternary structure, homodimer. Requires FMN as cofactor.

It catalyses the reaction pyridoxamine 5'-phosphate + O2 + H2O = pyridoxal 5'-phosphate + H2O2 + NH4(+). It carries out the reaction pyridoxine 5'-phosphate + O2 = pyridoxal 5'-phosphate + H2O2. It participates in cofactor metabolism; pyridoxal 5'-phosphate salvage; pyridoxal 5'-phosphate from pyridoxamine 5'-phosphate: step 1/1. Its pathway is cofactor metabolism; pyridoxal 5'-phosphate salvage; pyridoxal 5'-phosphate from pyridoxine 5'-phosphate: step 1/1. In terms of biological role, catalyzes the oxidation of either pyridoxine 5'-phosphate (PNP) or pyridoxamine 5'-phosphate (PMP) into pyridoxal 5'-phosphate (PLP). The chain is Pyridoxine/pyridoxamine 5'-phosphate oxidase from Thermosynechococcus vestitus (strain NIES-2133 / IAM M-273 / BP-1).